We begin with the raw amino-acid sequence, 707 residues long: Choline transporter-like protein 4 (707 aa).

The Cytoplasmic segment spans residues 1 to 32 (MGKKQKENEAYGNSAKYDPSFRGPIKNRGCTD). A helical membrane pass occupies residues 33–53 (IICCVLFLVFILGYIVVGLVA). The Extracellular portion of the chain corresponds to 54 to 227 (WVYGDPRQVL…KIFEDFAQSW (174 aa)). Residues Asn67, Asn185, Asn195, and Asn196 are each glycosylated (N-linked (GlcNAc...) asparagine). Residues 228-248 (YWILVALGVALVLSLLFILLL) traverse the membrane as a helical segment. The Cytoplasmic segment spans residues 249–250 (RL). Residues 251-271 (VAAPLVLLLIVGVLAVLAYGI) traverse the membrane as a helical segment. Residues 272 to 307 (YHCWQQYRELRDQGVSITQLGFTANLSAYQNVKETW) are Extracellular-facing. Asn296 carries N-linked (GlcNAc...) asparagine glycosylation. Residues 308–328 (LAALIILAVLEGVLLLMLIFL) form a helical membrane-spanning segment. Residues 329 to 356 (RQRIRIAIALLKEASRAVGQMMSTMFYP) lie on the Cytoplasmic side of the membrane. A helical membrane pass occupies residues 357–377 (LVTFVLLVICIGYWAVTALYL). Topologically, residues 378–452 (ATSGQPQYVY…GILGLFWTVN (75 aa)) are extracellular. N-linked (GlcNAc...) asparagine glycans are attached at residues Asn391, Asn403, and Asn413. Residues 453–473 (WVLALGQCVLAGAFASFYWAF) form a helical membrane-spanning segment. The Cytoplasmic portion of the chain corresponds to 474–498 (HKPRDIPTFPLSSAFIRTLRYHTGS). Residues 499-519 (LAFGALILTLVQIARVILEYI) form a helical membrane-spanning segment. The Extracellular segment spans residues 520–557 (DHKLRGSQNPVARCIICCFKCCLWCLEKFIKFLNRNAY). Residues 558-578 (IMIAIYGKNFCVSAKNAFMLL) traverse the membrane as a helical segment. The Cytoplasmic portion of the chain corresponds to 579–594 (MRNVVRVVVLDKVTDL). A helical membrane pass occupies residues 595–615 (LLFFGKLLVVGGVGVLSFFFF). The Extracellular segment spans residues 616–635 (SGRIKGLGKDFKNPDLNYYW). The chain crosses the membrane as a helical span at residues 636–656 (LPIMTSIMGAYVIASGFFSVF). Topologically, residues 657–707 (GMCVDTLFLCFLEDLERNDGSQERPYYMPKALLKILGKKNEVPTGGKNRKK) are cytoplasmic.

The protein belongs to the CTL (choline transporter-like) family. Post-translationally, N-glycosylated; N-glycosylation of Asn-67 and Asn-391 is required for a proper thiamine pyrophosphate uptake. Highly expressed in intestine, kidney and stomach. Also expressed in testis and lung.

The protein localises to the membrane. The protein resides in the apical cell membrane. The catalysed reaction is choline(out) + n H(+)(in) = choline(in) + n H(+)(out). It carries out the reaction thiamine diphosphate(out) = thiamine diphosphate(in). Functionally, choline transporter that plays a role in the choline-acetylcholine system and is required to the efferent innervation of hair cells in the olivocochlear bundle for the maintenance of physiological function of outer hair cells and the protection of hair cells from acoustic injury. Also described as a thiamine pyrophosphate transporter in colon, may mediate the absorption of microbiota-generated thiamine pyrophosphate and contribute to host thiamine (vitamin B1) homeostasis. The chain is Choline transporter-like protein 4 from Rattus norvegicus (Rat).